Here is a 221-residue protein sequence, read N- to C-terminus: Carbonic anhydrase (221 aa).

Zn(2+) contacts are provided by Cys38, Asp40, His99, and Cys102.

The protein belongs to the beta-class carbonic anhydrase family. Requires Zn(2+) as cofactor.

The enzyme catalyses hydrogencarbonate + H(+) = CO2 + H2O. This chain is Carbonic anhydrase (cynT), found in Helicobacter pylori (strain ATCC 700392 / 26695) (Campylobacter pylori).